We begin with the raw amino-acid sequence, 204 residues long: Recombination protein RecR (204 aa).

The segment at 59-74 (CTRCNTFTELEICGTC) adopts a C4-type zinc-finger fold. A Toprim domain is found at 82-181 (TLLCVVETPA…KVSRLARGVP (100 aa)).

It belongs to the RecR family.

May play a role in DNA repair. It seems to be involved in an RecBC-independent recombinational process of DNA repair. It may act with RecF and RecO. The polypeptide is Recombination protein RecR (Cupriavidus metallidurans (strain ATCC 43123 / DSM 2839 / NBRC 102507 / CH34) (Ralstonia metallidurans)).